The following is a 415-amino-acid chain: MFS-type transporter FVEG_12626 (415 aa).

Over residues 1–18 (MDPDTEQMRVEKPNHEQP) the composition is skewed to basic and acidic residues. Positions 1–22 (MDPDTEQMRVEKPNHEQPKPNT) are disordered. The next 6 membrane-spanning stretches (helical) occupy residues 27-47 (GGFK…VGVF), 63-83 (TVSW…PFVG), 93-113 (YLLL…SISS), 118-138 (YILS…YPSF), 151-171 (LALG…PIVV), and 178-198 (IGFG…LLVT). An N-linked (GlcNAc...) asparagine glycan is attached at Asn-199. A run of 6 helical transmembrane segments spans residues 227–247 (FILT…PITF), 264–284 (YLVS…GYIA), 290–310 (FNVS…LWLP), 318–338 (IAFA…SPAL), 354–374 (TMYA…GALI), and 386–406 (VFAG…RLYI).

The protein belongs to the major facilitator superfamily. Monocarboxylate porter (TC 2.A.1.13) family.

Its subcellular location is the membrane. In terms of biological role, MFS-type transporter; part of the Fusarium detoxification of benzoxazolinone cluster 2 (FDB2) involved in the degradation of benzoxazolinones produced by the host plant. Maize, wheat, and rye produce the 2 benzoxazinone phytoanticipins 2,4-dihy-droxy-7-methoxy-1,4-benzoxazin-3-one (DIMBOA) and 2,4-dihydroxy-1,4-benzoxazin-3-one (DIBOA) that, due to their inherent instability once released, spontaneously degrade to the more stable corresponding benzoxazolinones, 6-methoxy-2-benzoxazolinone (MBOA) and 2-benzoxazolinone (BOA), respectively. In Gibberella moniliformis (strain M3125 / FGSC 7600) (Maize ear and stalk rot fungus), this protein is MFS-type transporter FVEG_12626.